Reading from the N-terminus, the 1090-residue chain is UPF0507 protein EC1118_1M3_1541g (1090 aa).

The VPS9 domain maps to 289–436 (FSVNQLLTDF…FEDFNKNTGN (148 aa)).

The protein belongs to the UPF0507 family.

The sequence is that of UPF0507 protein EC1118_1M3_1541g from Saccharomyces cerevisiae (strain Lalvin EC1118 / Prise de mousse) (Baker's yeast).